The following is a 128-amino-acid chain: Holo-[acyl-carrier-protein] synthase (128 aa).

Residues Asp8 and Glu58 each contribute to the Mg(2+) site.

The protein belongs to the P-Pant transferase superfamily. AcpS family. The cofactor is Mg(2+).

It localises to the cytoplasm. It catalyses the reaction apo-[ACP] + CoA = holo-[ACP] + adenosine 3',5'-bisphosphate + H(+). Its function is as follows. Transfers the 4'-phosphopantetheine moiety from coenzyme A to a Ser of acyl-carrier-protein. This chain is Holo-[acyl-carrier-protein] synthase, found in Alkalilimnicola ehrlichii (strain ATCC BAA-1101 / DSM 17681 / MLHE-1).